Here is a 542-residue protein sequence, read N- to C-terminus: ATP synthase subunit beta (542 aa).

The span at 1–50 (MAKTPAKAPAAAAKPAAVKKPAAPKAAAAPKAAAVATPAAKKPAAPKAAP) shows a compositional bias: low complexity. Positions 1-61 (MAKTPAKAPA…SKVAGTREKP (61 aa)) are disordered. An ATP-binding site is contributed by 216 to 223 (GGAGVGKT).

The protein belongs to the ATPase alpha/beta chains family. In terms of assembly, F-type ATPases have 2 components, CF(1) - the catalytic core - and CF(0) - the membrane proton channel. CF(1) has five subunits: alpha(3), beta(3), gamma(1), delta(1), epsilon(1). CF(0) has three main subunits: a(1), b(2) and c(9-12). The alpha and beta chains form an alternating ring which encloses part of the gamma chain. CF(1) is attached to CF(0) by a central stalk formed by the gamma and epsilon chains, while a peripheral stalk is formed by the delta and b chains.

The protein localises to the cell inner membrane. The enzyme catalyses ATP + H2O + 4 H(+)(in) = ADP + phosphate + 5 H(+)(out). Functionally, produces ATP from ADP in the presence of a proton gradient across the membrane. The catalytic sites are hosted primarily by the beta subunits. The sequence is that of ATP synthase subunit beta from Caulobacter sp. (strain K31).